Consider the following 254-residue polypeptide: Low affinity immunoglobulin gamma Fc region receptor III-A (254 aa).

Positions 1–20 (MWQLLLPTALLLLVSAGMRA) are cleaved as a signal peptide. Residues 21–206 (EDLPKAVVFL…SSISSFFPPG (186 aa)) lie on the Extracellular side of the membrane. 2 Ig-like C2-type domains span residues 24-105 (PKAV…LEVH) and 107-189 (GWLL…VNIT). 2 disulfides stabilise this stretch: Cys-47/Cys-89 and Cys-128/Cys-172. Residue Asn-187 is glycosylated (N-linked (GlcNAc...) asparagine). Residues 207–229 (YQVSFCLVMVLLFAVDTGLYFSV) form a helical membrane-spanning segment. Residues 230 to 254 (KKSVPSSTRDWEDHKFKWSKDPQDK) lie on the Cytoplasmic side of the membrane.

In terms of assembly, forms a heterooligomeric complex with ITAM-containing signaling subunits, either a homodimer of CD247, a homodimer of FCER1G or a heterodimer of CD247 and FCER1G, to form a functional receptor complex. Interacts (via transmembrane domain) with signaling subunits; this interaction is a prerequisite for receptor complex expression on the cell surface and intracellular signal transduction. Binds the Fc region of antigen-complexed IgG with a preference for IgG1 and IgG3 isotypes. Interacts with CD2; this interaction is involved in NK cell activation and cytotoxicity. Interacts with S100A4; this interaction inhibits PKC-dependent phosphorylation of FCGR3A. In terms of processing, glycosylated. Glycosylation plays an inhibitory role in the interaction with IgG1 and IgG2. Post-translationally, undergoes rapid ectodomain shedding upon NK cell stimulation. The soluble form is produced by a proteolytic cleavage mediated by ADAM17. Repeated stimulation causes receptor shedding, a mechanism that allows for increased NK cell motility and detachment from opsonized target cells while avoiding activation-induced NK cell apoptosis. Lymphocytes and monocytes.

It localises to the cell membrane. Its subcellular location is the secreted. Receptor for the invariable Fc fragment of immunoglobulin gamma (IgG). Optimally activated upon binding of clustered antigen-IgG complexes displayed on cell surfaces, triggers lysis of antibody-coated cells, a process known as antibody-dependent cellular cytotoxicity (ADCC). Does not bind free monomeric IgG, thus avoiding inappropriate effector cell activation in the absence of antigenic trigger. Mediates IgG effector functions on natural killer (NK) cells. Binds antigen-IgG complexes generated upon infection and triggers NK cell-dependent cytokine production and degranulation to limit viral load and propagation. Involved in the generation of memory-like adaptive NK cells capable to produce high amounts of IFNG and to efficiently eliminate virus-infected cells via ADCC. Regulates NK cell survival and proliferation, in particular by preventing NK cell progenitor apoptosis. Fc-binding subunit that associates with CD247 and/or FCER1G adapters to form functional signaling complexes. Following the engagement of antigen-IgG complexes, triggers phosphorylation of immunoreceptor tyrosine-based activation motif (ITAM)-containing adapters with subsequent activation of phosphatidylinositol 3-kinase signaling and sustained elevation of intracellular calcium that ultimately drive NK cell activation. The ITAM-dependent signaling coupled to receptor phosphorylation by PKC mediates robust intracellular calcium flux that leads to production of pro-inflammatory cytokines, whereas in the absence of receptor phosphorylation it mainly activates phosphatidylinositol 3-kinase signaling leading to cell degranulation. Costimulates NK cells and trigger lysis of target cells independently of IgG binding. Mediates the antitumor activities of therapeutic antibodies. Upon ligation on monocytes triggers TNFA-dependent ADCC of IgG-coated tumor cells. Mediates enhanced ADCC in response to afucosylated IgGs. The polypeptide is Low affinity immunoglobulin gamma Fc region receptor III-A (Macaca mulatta (Rhesus macaque)).